The following is a 1653-amino-acid chain: Alpha-2-macroglobulin (1653 aa).

The signal sequence occupies residues 1-17 (MKKLRVAACMLMLALAG). Residue cysteine 18 is the site of N-palmitoyl cysteine attachment. Cysteine 18 carries S-diacylglycerol cysteine lipidation. A cross-link (isoglutamyl cysteine thioester (Cys-Gln)) is located at residues 1187–1190 (CLEQ). Residues 1559–1589 (NQNLANGSASLEQSGGEVQNLLNQMQQASIK) adopt a coiled-coil conformation.

It belongs to the protease inhibitor I39 (alpha-2-macroglobulin) family. Bacterial alpha-2-macroglobulin subfamily. In terms of assembly, may form homooligomers.

The protein resides in the cell inner membrane. Functionally, protects the bacterial cell from host peptidases. Acts by a 'trapping' mechanism. Cleavage of the bait-region domain by host peptidases leads to a global conformational change, which results in entrapment of the host peptidase and activation of the thioester bond that covalently binds the attacking host peptidase. Trapped peptidases are still active except against very large substrates. May protect the entire periplam, including the lipoproteins anchored to the periplasmic side of the outer membrane, against intruding endopeptidases. This is Alpha-2-macroglobulin (yfhM) from Escherichia coli (strain K12).